A 453-amino-acid chain; its full sequence is Tol-Pal system protein TolB (453 aa).

A signal peptide spans 1-39 (MSFIPNTEAEALSALFSRRSVLGATAAGGLLATPLAAFA).

The protein belongs to the TolB family. The Tol-Pal system is composed of five core proteins: the inner membrane proteins TolA, TolQ and TolR, the periplasmic protein TolB and the outer membrane protein Pal. They form a network linking the inner and outer membranes and the peptidoglycan layer.

It localises to the periplasm. Its function is as follows. Part of the Tol-Pal system, which plays a role in outer membrane invagination during cell division and is important for maintaining outer membrane integrity. This Gluconobacter oxydans (strain 621H) (Gluconobacter suboxydans) protein is Tol-Pal system protein TolB.